The following is a 179-amino-acid chain: Inner membrane-spanning protein YciB (179 aa).

5 helical membrane-spanning segments follow: residues 22-42, 50-70, 76-96, 121-141, and 149-169; these read IYAA…YSWV, MALI…FFHN, WKVT…QWVM, LAWA…AFWL, and FKVF…GIYI.

This sequence belongs to the YciB family.

Its subcellular location is the cell inner membrane. Functionally, plays a role in cell envelope biogenesis, maintenance of cell envelope integrity and membrane homeostasis. The chain is Inner membrane-spanning protein YciB from Klebsiella pneumoniae subsp. pneumoniae (strain ATCC 700721 / MGH 78578).